A 618-amino-acid chain; its full sequence is Pyranose 2-oxidase (618 aa).

Residue His170 is modified to Tele-8alpha-FAD histidine. Positions 441 and 443 each coordinate substrate. His540 serves as the catalytic Proton acceptor. Residue Asn583 is part of the active site.

Belongs to the GMC oxidoreductase family. Homotetramer. FAD is required as a cofactor.

It catalyses the reaction D-glucose + O2 = 2-dehydro-D-glucose + H2O2. Catalyzes the oxidation of various aldopyranoses and disaccharides on carbon-2 to the corresponding 2-keto sugars concomitant with the reduction of O(2) to H(2)O(2). The sequence is that of Pyranose 2-oxidase (p2ox) from Lyophyllum shimeji (Hon-shimeji).